The following is a 487-amino-acid chain: UDP-N-acetylmuramate--L-alanine ligase (487 aa).

124–130 serves as a coordination point for ATP; the sequence is GTHGKTT.

It belongs to the MurCDEF family.

It localises to the cytoplasm. The enzyme catalyses UDP-N-acetyl-alpha-D-muramate + L-alanine + ATP = UDP-N-acetyl-alpha-D-muramoyl-L-alanine + ADP + phosphate + H(+). It functions in the pathway cell wall biogenesis; peptidoglycan biosynthesis. Its function is as follows. Cell wall formation. The chain is UDP-N-acetylmuramate--L-alanine ligase from Acaryochloris marina (strain MBIC 11017).